A 373-amino-acid polypeptide reads, in one-letter code: 4-hydroxy-3-methylbut-2-en-1-yl diphosphate synthase (flavodoxin) (373 aa).

Residues C270, C273, C305, and E312 each contribute to the [4Fe-4S] cluster site.

It belongs to the IspG family. It depends on [4Fe-4S] cluster as a cofactor.

The catalysed reaction is (2E)-4-hydroxy-3-methylbut-2-enyl diphosphate + oxidized [flavodoxin] + H2O + 2 H(+) = 2-C-methyl-D-erythritol 2,4-cyclic diphosphate + reduced [flavodoxin]. It functions in the pathway isoprenoid biosynthesis; isopentenyl diphosphate biosynthesis via DXP pathway; isopentenyl diphosphate from 1-deoxy-D-xylulose 5-phosphate: step 5/6. In terms of biological role, converts 2C-methyl-D-erythritol 2,4-cyclodiphosphate (ME-2,4cPP) into 1-hydroxy-2-methyl-2-(E)-butenyl 4-diphosphate. The polypeptide is 4-hydroxy-3-methylbut-2-en-1-yl diphosphate synthase (flavodoxin) (Photorhabdus laumondii subsp. laumondii (strain DSM 15139 / CIP 105565 / TT01) (Photorhabdus luminescens subsp. laumondii)).